Reading from the N-terminus, the 304-residue chain is D-alanine--D-alanine ligase (304 aa).

The ATP-grasp domain occupies 101–298; sequence KKIFIKNKIL…FIKLIEWILK (198 aa). 131–184 contributes to the ATP binding site; that stretch reads EKNLKFPVVVKPINEGSSVHVYICDKTNILKNLKVLKSYNEILIEEFIPGREIQ. Mg(2+) contacts are provided by Asp253, Glu265, and Asn267.

Belongs to the D-alanine--D-alanine ligase family. Requires Mg(2+) as cofactor. Mn(2+) serves as cofactor.

The protein localises to the cytoplasm. The enzyme catalyses 2 D-alanine + ATP = D-alanyl-D-alanine + ADP + phosphate + H(+). It functions in the pathway cell wall biogenesis; peptidoglycan biosynthesis. In terms of biological role, cell wall formation. The sequence is that of D-alanine--D-alanine ligase from Pelagibacter ubique (strain HTCC1062).